The following is a 228-amino-acid chain: Sugar fermentation stimulation protein homolog (228 aa).

This sequence belongs to the SfsA family.

In Desulfitobacterium hafniense (strain Y51), this protein is Sugar fermentation stimulation protein homolog.